The primary structure comprises 239 residues: AA9 family lytic polysaccharide monooxygenase C (239 aa).

Cu(2+) is bound at residue H1. A disulfide bond links C39 and C190. A glycan (N-linked (GlcNAc...) asparagine) is linked at N75. Position 84 (H84) interacts with Cu(2+). N-linked (GlcNAc...) asparagine glycosylation occurs at N135. Residues H157 and Q166 each contribute to the O2 site. Y168 contacts Cu(2+). N-linked (GlcNAc...) asparagine glycosylation is found at N194 and N229.

It belongs to the polysaccharide monooxygenase AA9 family. Cu(2+) serves as cofactor.

It localises to the secreted. It carries out the reaction [(1-&gt;4)-beta-D-glucosyl]n+m + reduced acceptor + O2 = 4-dehydro-beta-D-glucosyl-[(1-&gt;4)-beta-D-glucosyl]n-1 + [(1-&gt;4)-beta-D-glucosyl]m + acceptor + H2O.. Its function is as follows. Lytic polysaccharide monooxygenase (LPMO) that depolymerizes crystalline and amorphous polysaccharides via the oxidation of scissile alpha- or beta-(1-4)-glycosidic bonds, yielding C1 or C4 oxidation products. Catalysis by LPMOs requires the reduction of the active-site copper from Cu(II) to Cu(I) by a reducing agent and H(2)O(2) or O(2) as a cosubstrate. This chain is AA9 family lytic polysaccharide monooxygenase C, found in Gloeophyllum trabeum (Brown rot fungus).